We begin with the raw amino-acid sequence, 689 residues long: Glycine--tRNA ligase beta subunit (689 aa).

Belongs to the class-II aminoacyl-tRNA synthetase family. Tetramer of two alpha and two beta subunits.

The protein resides in the cytoplasm. The catalysed reaction is tRNA(Gly) + glycine + ATP = glycyl-tRNA(Gly) + AMP + diphosphate. This is Glycine--tRNA ligase beta subunit from Desulforapulum autotrophicum (strain ATCC 43914 / DSM 3382 / VKM B-1955 / HRM2) (Desulfobacterium autotrophicum).